Consider the following 195-residue polypeptide: Ribonuclease HII (195 aa).

In terms of domain architecture, RNase H type-2 spans 6-195 (SLIAGVDEVG…KSFISRLEIN (190 aa)). Residues Asp-12, Glu-13, and Asp-108 each contribute to the a divalent metal cation site.

The protein belongs to the RNase HII family. The cofactor is Mn(2+). Mg(2+) is required as a cofactor.

The protein resides in the cytoplasm. It catalyses the reaction Endonucleolytic cleavage to 5'-phosphomonoester.. In terms of biological role, endonuclease that specifically degrades the RNA of RNA-DNA hybrids. This chain is Ribonuclease HII, found in Prochlorococcus marinus (strain NATL1A).